We begin with the raw amino-acid sequence, 967 residues long: Leucine--tRNA ligase (967 aa).

Positions 43–53 match the 'HIGH' region motif; it reads PYLSGHLHVGH. Positions 650–654 match the 'KMSKS' region motif; the sequence is KMSKS. Lysine 653 contacts ATP.

This sequence belongs to the class-I aminoacyl-tRNA synthetase family.

It is found in the cytoplasm. It catalyses the reaction tRNA(Leu) + L-leucine + ATP = L-leucyl-tRNA(Leu) + AMP + diphosphate. The chain is Leucine--tRNA ligase from Pyrococcus furiosus (strain ATCC 43587 / DSM 3638 / JCM 8422 / Vc1).